A 119-amino-acid polypeptide reads, in one-letter code: Large ribosomal subunit protein uL18 (119 aa).

It belongs to the universal ribosomal protein uL18 family. As to quaternary structure, part of the 50S ribosomal subunit; part of the 5S rRNA/L5/L18/L25 subcomplex. Contacts the 5S and 23S rRNAs.

In terms of biological role, this is one of the proteins that bind and probably mediate the attachment of the 5S RNA into the large ribosomal subunit, where it forms part of the central protuberance. This Mycoplasmoides gallisepticum (strain R(low / passage 15 / clone 2)) (Mycoplasma gallisepticum) protein is Large ribosomal subunit protein uL18.